Here is a 496-residue protein sequence, read N- to C-terminus: MTAAHPVAQLTAEAYPKVKRNPNFKVLDSEDLAYFRSILSNDEILNSQAPEELASFNQDWMKKYRGQSNLILLPNSTDKVSKIMKYCNDKKLAVVPQGGNTDLVGASVPVFDEIVLSLRNMNKVRDFDPVSGTFKCDAGVVMRDAHQFLHDHDHIFPLDLPSRNNCQVGGVVSTNAGGLNFLRYGSLHGNVLGLEVVLPNGEIISNINALRKDNTGYDLKQLFIGAEGTIGVVTGVSIVAAAKPKALNAVFFGIENFDTVQKLFVKAKSELSEILSAFEFMDRGSIECTIEYLKDLPFPLENQHNFYVLIETSGSNKRHDDEKLTAFLKDTTDSKLISEGMMAKDKADFDRLWTWRKSVPTACNSYGGMYKYDMSLQLKDLYSVSAAVTERLNAAGLIGDAPKPVVKSCGYGHVGDGNIHLNIAVREFTKQIEDLLEPFVYEYIASKKGSISAEHGIGFHKKGKLHYTRSDIEIRFMKDIKNHYDPNGILNPYKYI.

A Glycyl lysine isopeptide (Lys-Gly) (interchain with G-Cter in ubiquitin) cross-link involves residue lysine 17. The FAD-binding PCMH-type domain occupies 64 to 243 (YRGQSNLILL…TGVSIVAAAK (180 aa)).

It belongs to the FAD-binding oxidoreductase/transferase type 4 family. FAD serves as cofactor.

The protein resides in the cytoplasm. The catalysed reaction is (R)-lactate + 2 Fe(III)-[cytochrome c] = 2 Fe(II)-[cytochrome c] + pyruvate + 2 H(+). It catalyses the reaction (R)-2-hydroxyglutarate + pyruvate = (R)-lactate + 2-oxoglutarate. Functionally, catalyzes the reversible oxidation of (R)-2-hydroxyglutarate to 2-oxoglutarate coupled to reduction of pyruvate to (R)-lactate. Can also use oxaloacetate as electron acceptor instead of pyruvate producing (R)-malate. The chain is D-2-hydroxyglutarate--pyruvate transhydrogenase DLD3 (DLD3) from Saccharomyces cerevisiae (strain ATCC 204508 / S288c) (Baker's yeast).